Reading from the N-terminus, the 465-residue chain is MTAQDFVVKDIGLAAYGRKELDIAETEMPGLMACRKEFSSSQPLRGARISGSLHMTIQTAVLIETLKAIGADIRWSSSNIFSTQDHAAAAIAATGIPVFAVKGETLEEYWTYIDAIFQWPDGHPSNMILDDGADATNYILVGSRAEQNKDILSHPKTEEEEIFFKQIQKRMDATPGFFTRQRAAIKGVSEETTTGVNRLYQLQKEGLLPFPAINVNDSVTKSKFDNKYGCKESLVDGIRRGTDVMIAGKTAIVCGYGDVGKGSAASLSGAGARVKVTEIDPICALQAAMDGYEVVNLDDAASSADIIITTTGNKDVVRLDHMRQVKDMCILGNIGHFDNEIQVAALRNLPWTNIKPQVDMITFPDGKRIILLSEGRLLNLGNATGHPSFVMSASFTNQVLAQIELFTRAEHYTNEVTVLPKNLDEKVARLHLDRLGIKLTVLSEEQAAYIGVTPQGPYKPNHYRY.

Positions 56, 131, and 191 each coordinate substrate. Residue 192-194 (TTT) participates in NAD(+) binding. 2 residues coordinate substrate: Lys221 and Asp225. Residues Asn226, 255–260 (GYGDVG), Glu278, Asn313, 334–336 (IGH), and Asn379 contribute to the NAD(+) site.

It belongs to the adenosylhomocysteinase family. The cofactor is NAD(+).

Its subcellular location is the cytoplasm. The catalysed reaction is S-adenosyl-L-homocysteine + H2O = L-homocysteine + adenosine. Its pathway is amino-acid biosynthesis; L-homocysteine biosynthesis; L-homocysteine from S-adenosyl-L-homocysteine: step 1/1. May play a key role in the regulation of the intracellular concentration of adenosylhomocysteine. This Bartonella tribocorum (strain CIP 105476 / IBS 506) protein is Adenosylhomocysteinase.